Reading from the N-terminus, the 201-residue chain is Fas apoptotic inhibitory molecule 1 (201 aa).

The protein belongs to the FAIM1 family.

It is found in the cytoplasm. Plays a role as an inducible effector molecule that mediates Fas resistance produced by surface Ig engagement in B cells. In Rattus norvegicus (Rat), this protein is Fas apoptotic inhibitory molecule 1 (Faim).